A 433-amino-acid polypeptide reads, in one-letter code: Glutamate-1-semialdehyde 2,1-aminomutase (433 aa).

The residue at position 266 (Lys-266) is an N6-(pyridoxal phosphate)lysine.

It belongs to the class-III pyridoxal-phosphate-dependent aminotransferase family. HemL subfamily. In terms of assembly, homodimer. Pyridoxal 5'-phosphate serves as cofactor.

The protein resides in the cytoplasm. The catalysed reaction is (S)-4-amino-5-oxopentanoate = 5-aminolevulinate. Its pathway is porphyrin-containing compound metabolism; protoporphyrin-IX biosynthesis; 5-aminolevulinate from L-glutamyl-tRNA(Glu): step 2/2. The polypeptide is Glutamate-1-semialdehyde 2,1-aminomutase (Psychrobacter arcticus (strain DSM 17307 / VKM B-2377 / 273-4)).